A 166-amino-acid chain; its full sequence is Emerin homolog 1 (166 aa).

Residues 1 to 44 (MDVSQLTDAELRDSLKSHGVSVGPIVATTRKLYEKKLIKLSDGS) form the LEM domain. The Nuclear segment spans residues 1–127 (MDVSQLTDAE…QAQSNKGGFL (127 aa)). The tract at residues 62–99 (IISSSPKKSPPQRVFQNVSAATAAATTSPESDSDDCEE) is disordered. The helical transmembrane segment at 128 to 148 (GSTITFTILFVFIAVFAYFLI) threads the bilayer. The Perinuclear space portion of the chain corresponds to 149 to 166 (ENAEQLKLVAETNPEDTI).

As to quaternary structure, interacts with lmn-1 and baf-1. As to expression, ubiquitous. Expressed in all cells, except in cells undergoing spermatogenesis. High expression in hypodermis, neurons, pharyngeal muscle, body wall muscle and gonadal sheath.

It is found in the nucleus inner membrane. The protein resides in the nucleus envelope. Its function is as follows. Nuclear lamina-associated inner nuclear membrane protein that is involved in cell division, nuclear structure organization, maintenance of nuclear envelope integrity and nuclear envelope reformation after mitosis. Involved in chromosome segregation and cell division, probably via its interaction with the nuclear intermediate filament protein lmn-1, the main component of nuclear lamina. Required to organize the distribution of lmn-1, nuclear pore complexes (NPCs) and chromatin in mitotically active cells. Together with lem-2, plays a role in baf-1 enrichment at the nuclear envelope in anaphase. Together with lem-2, involved in muscle cell attachment to hypodermal cells, as well as muscle cell location and sarcomere organization. May play a role in radiation-induced DNA damage repair response. May repress binding of transcription factor pha-4 with target sequences in pharyngeal cells. This chain is Emerin homolog 1 (emr-1), found in Caenorhabditis elegans.